The primary structure comprises 153 residues: Ubiquitin/ISG15-conjugating enzyme E2 L6 (153 aa).

Residues Met2–Val149 enclose the UBC core domain. The Glycyl thioester intermediate role is filled by Cys86.

It belongs to the ubiquitin-conjugating enzyme family. Interacts with RNF19A, RNF19B and RNF144B. Interacts with FLT3 (tyrosine phosphorylated). In terms of processing, ISGylated.

It catalyses the reaction S-ubiquitinyl-[E1 ubiquitin-activating enzyme]-L-cysteine + [E2 ubiquitin-conjugating enzyme]-L-cysteine = [E1 ubiquitin-activating enzyme]-L-cysteine + S-ubiquitinyl-[E2 ubiquitin-conjugating enzyme]-L-cysteine.. It functions in the pathway protein modification; protein ubiquitination. Catalyzes the covalent attachment of ubiquitin or ISG15 to other proteins. Functions in the E6/E6-AP-induced ubiquitination of p53/TP53. Promotes ubiquitination and subsequent proteasomal degradation of FLT3. The chain is Ubiquitin/ISG15-conjugating enzyme E2 L6 (Ube2l6) from Mus musculus (Mouse).